Reading from the N-terminus, the 150-residue chain is UPF0178 protein DMR_20710 (150 aa).

It belongs to the UPF0178 family.

The sequence is that of UPF0178 protein DMR_20710 from Solidesulfovibrio magneticus (strain ATCC 700980 / DSM 13731 / RS-1) (Desulfovibrio magneticus).